The chain runs to 539 residues: Aluminum-activated malate transporter 13 (539 aa).

6 consecutive transmembrane segments (helical) span residues 57–77 (VGVA…FEGV), 80–100 (NALW…GATL), 107–127 (GLGT…AIHS), 130–150 (ILGG…ITYM), 165–185 (LVFL…DTVI), and 192–212 (LYTI…FFPI).

Belongs to the aromatic acid exporter (TC 2.A.85) family.

The protein localises to the membrane. Its function is as follows. Malate transporter. The protein is Aluminum-activated malate transporter 13 (ALMT13) of Arabidopsis thaliana (Mouse-ear cress).